The primary structure comprises 107 residues: uncharacterized protein (107 aa).

4 helical membrane-spanning segments follow: residues 9 to 28 (FLVF…LIME), 33 to 50 (SYII…SLNI), 55 to 72 (LAIA…AIHV), and 77 to 99 (YRVI…YLKG).

The protein localises to the cell membrane. This is an uncharacterized protein from Archaeoglobus fulgidus (strain ATCC 49558 / DSM 4304 / JCM 9628 / NBRC 100126 / VC-16).